Consider the following 321-residue polypeptide: Protein ATP1B4 (321 aa).

A disordered region spans residues 1–41 (MEPGMEMNTASEGGTRRGPENKHEEKVQDPNRGEAETKAEM). The Cytoplasmic portion of the chain corresponds to 1-72 (MEPGMEMNTA…RTCMGRTAKS (72 aa)). A compositionally biased stretch (basic and acidic residues) spans 14 to 41 (GTRRGPENKHEEKVQDPNRGEAETKAEM). The chain crosses the membrane as a helical span at residues 73–93 (WGLILLFYFIFYTCLAGMFAF). Topologically, residues 94–321 (CMYVMLLTLS…RIIFTLSIGK (228 aa)) are extracellular. N-linked (GlcNAc...) asparagine glycans are attached at residues Asn-132, Asn-176, and Asn-193. Cys-165 and Cys-184 are oxidised to a cystine. 2 disulfide bridges follow: Cys-194/Cys-210 and Cys-233/Cys-293. Asn-239, Asn-252, and Asn-270 each carry an N-linked (GlcNAc...) asparagine glycan.

It belongs to the X(+)/potassium ATPases subunit beta family. As to quaternary structure, composed of two subunits: alpha (catalytic) and beta (accessory). Glycosylated. Expressed in skeletal muscle, intestine, heart, brain, retina, inner ear and skin.

It is found in the membrane. This is the non-catalytic component of the active enzyme, which catalyzes the hydrolysis of ATP coupled with the exchange of Na(+) and K(+) ions across the plasma membrane. The polypeptide is Protein ATP1B4 (ATP1B4) (Gallus gallus (Chicken)).